We begin with the raw amino-acid sequence, 248 residues long: 4-hydroxy-tetrahydrodipicolinate reductase (248 aa).

Residues 8 to 13, aspartate 34, 76 to 78, and 103 to 106 contribute to the NAD(+) site; these read GAKGRV, GTT, and APNF. The active-site Proton donor/acceptor is the histidine 133. Histidine 134 lines the (S)-2,3,4,5-tetrahydrodipicolinate pocket. Residue lysine 137 is the Proton donor of the active site. 143-144 contributes to the (S)-2,3,4,5-tetrahydrodipicolinate binding site; that stretch reads GT.

The protein belongs to the DapB family.

It localises to the cytoplasm. The enzyme catalyses (S)-2,3,4,5-tetrahydrodipicolinate + NAD(+) + H2O = (2S,4S)-4-hydroxy-2,3,4,5-tetrahydrodipicolinate + NADH + H(+). It catalyses the reaction (S)-2,3,4,5-tetrahydrodipicolinate + NADP(+) + H2O = (2S,4S)-4-hydroxy-2,3,4,5-tetrahydrodipicolinate + NADPH + H(+). The protein operates within amino-acid biosynthesis; L-lysine biosynthesis via DAP pathway; (S)-tetrahydrodipicolinate from L-aspartate: step 4/4. Catalyzes the conversion of 4-hydroxy-tetrahydrodipicolinate (HTPA) to tetrahydrodipicolinate. This Corynebacterium urealyticum (strain ATCC 43042 / DSM 7109) protein is 4-hydroxy-tetrahydrodipicolinate reductase.